Consider the following 127-residue polypeptide: Small ribosomal subunit protein uS11 (127 aa).

This sequence belongs to the universal ribosomal protein uS11 family. In terms of assembly, part of the 30S ribosomal subunit.

Located on the platform of the 30S subunit. The polypeptide is Small ribosomal subunit protein uS11 (Natronomonas pharaonis (strain ATCC 35678 / DSM 2160 / CIP 103997 / JCM 8858 / NBRC 14720 / NCIMB 2260 / Gabara) (Halobacterium pharaonis)).